A 160-amino-acid chain; its full sequence is Cathelin-related peptide SC5 (160 aa).

The signal sequence occupies residues 1 to 29; it reads METQRASLSLGRCSLWLLLLGLALPSASA. A propeptide spanning residues 30–131 is cleaved from the precursor; sequence QVLSYREAVL…DITCAEPQSV (102 aa). Intrachain disulfides connect Cys86–Cys97 and Cys108–Cys125.

Belongs to the cathelicidin family.

It localises to the secreted. In terms of biological role, broad spectrum bactericidal agent. The chain is Cathelin-related peptide SC5 from Ovis aries (Sheep).